Here is a 492-residue protein sequence, read N- to C-terminus: Glutamate--tRNA ligase (492 aa).

The short motif at 13–23 (PSPTGTPHVGM) is the 'HIGH' region element. A 'KMSKS' region motif is present at residues 257-261 (KLSKR). Lys-260 contacts ATP.

Belongs to the class-I aminoacyl-tRNA synthetase family. Glutamate--tRNA ligase type 1 subfamily. As to quaternary structure, monomer.

Its subcellular location is the cytoplasm. The enzyme catalyses tRNA(Glu) + L-glutamate + ATP = L-glutamyl-tRNA(Glu) + AMP + diphosphate. Catalyzes the attachment of glutamate to tRNA(Glu) in a two-step reaction: glutamate is first activated by ATP to form Glu-AMP and then transferred to the acceptor end of tRNA(Glu). The polypeptide is Glutamate--tRNA ligase (Mycolicibacterium paratuberculosis (strain ATCC BAA-968 / K-10) (Mycobacterium paratuberculosis)).